The chain runs to 137 residues: Nucleoside diphosphate kinase (137 aa).

6 residues coordinate ATP: lysine 9, phenylalanine 57, arginine 85, threonine 91, arginine 102, and asparagine 112. Residue histidine 115 is the Pros-phosphohistidine intermediate of the active site.

It belongs to the NDK family. In terms of assembly, homotetramer. It depends on Mg(2+) as a cofactor.

The protein resides in the cytoplasm. It carries out the reaction a 2'-deoxyribonucleoside 5'-diphosphate + ATP = a 2'-deoxyribonucleoside 5'-triphosphate + ADP. The enzyme catalyses a ribonucleoside 5'-diphosphate + ATP = a ribonucleoside 5'-triphosphate + ADP. Functionally, major role in the synthesis of nucleoside triphosphates other than ATP. The ATP gamma phosphate is transferred to the NDP beta phosphate via a ping-pong mechanism, using a phosphorylated active-site intermediate. The protein is Nucleoside diphosphate kinase of Campylobacter concisus (strain 13826).